The primary structure comprises 227 residues: Nitrobenzene nitroreductase (227 aa).

Position 14–18 (14–18) interacts with FMN; that stretch reads RRAKR. S44 and I109 together coordinate NADP(+). Residues 172–173 and K215 contribute to the FMN site; that span reads VF.

This sequence belongs to the nitroreductase family. In terms of assembly, monomer. FMN serves as cofactor.

The catalysed reaction is N-phenylhydroxylamine + 2 NADP(+) + H2O = nitrobenzene + 2 NADPH + 2 H(+). The protein operates within xenobiotic degradation; nitrobenzene degradation. Its activity is regulated as follows. Inhibited by dicumarol, p-hydroxymercuribenzoate and salicyl hydroxamate. Functionally, involved in the biodegradation of nitroaromatic compounds. Catalyzes the two-electron reduction of nitrobenzene (NB) to produce a nitrosobenzene (NOB) intermediate, which is immediately reduced to hydroxylaminobenzene (HAB) by a second two-electron transfer. Also active on menadione and nitrofurazone. Replacing NADPH with NADH results in a 4-fold decrease in the reaction rate. The sequence is that of Nitrobenzene nitroreductase from Ectopseudomonas oleovorans (Pseudomonas oleovorans).